The following is a 108-amino-acid chain: UPF0060 membrane protein Mvan_3406 (108 aa).

4 consecutive transmembrane segments (helical) span residues 7–27 (LLFV…WQGV), 32–52 (GLTW…VAAF), 61–81 (VLAA…VVAD), and 87–107 (RWDI…MYAP).

The protein belongs to the UPF0060 family.

The protein resides in the cell membrane. The polypeptide is UPF0060 membrane protein Mvan_3406 (Mycolicibacterium vanbaalenii (strain DSM 7251 / JCM 13017 / BCRC 16820 / KCTC 9966 / NRRL B-24157 / PYR-1) (Mycobacterium vanbaalenii)).